The primary structure comprises 593 residues: Immunoglobulin G-binding protein G (593 aa).

The N-terminal stretch at 1–33 is a signal peptide; the sequence is MEKEKKVKYFLRKSAFGLASVSAAFLVGSTVFA. 5 consecutive repeat copies span residues 104–140, 179–215, 254–290, 303–357, and 373–427. The segment at 104 to 290 is 3 X 37 AA repeats; sequence LAKAKADALK…AKTVEGVKAL (187 aa). Positions 303 to 427 are 2 X 55 AA repeats; it reads TYKLILNGKT…DATKTFTVTE (125 aa). The tract at residues 503-567 is disordered; it reads PGDAPTEPEK…TLPTTGEGSN (65 aa). A compositionally biased stretch (basic and acidic residues) spans 529–557; the sequence is AKDDAKKDDTKKEDAKKPEAKKEDAKKAE. A 5 X 5 AA repeats of [DE]-D-A-K-K region spans residues 531–555; sequence DDAKKDDTKKEDAKKPEAKKEDAKK. The short motif at 559–563 is the LPXTG sorting signal element; that stretch reads LPTTG. Thr-562 bears the Pentaglycyl murein peptidoglycan amidated threonine mark. A propeptide spans 563-593 (removed by sortase); it reads GEGSNPFFTAAALAVMAGAGALAVASKRKED.

The protein resides in the secreted. The protein localises to the cell wall. This chain is Immunoglobulin G-binding protein G (spg), found in Streptococcus sp. group G.